A 340-amino-acid chain; its full sequence is Extracellular matrix protein-binding protein emp (340 aa).

The signal sequence occupies residues 1–26; the sequence is MKKKLLVLTMSTLFATQLINSNHANA.

The protein resides in the cell surface. Adhesin that binds to the host cell extracellular matrix proteins fibronectin, fibrinogen, collagen, and vitronectin. This chain is Extracellular matrix protein-binding protein emp (emp), found in Staphylococcus aureus.